A 103-amino-acid polypeptide reads, in one-letter code: Flagellar hook-basal body complex protein FliE (103 aa).

This sequence belongs to the FliE family.

It localises to the bacterial flagellum basal body. This Cronobacter sakazakii (strain ATCC BAA-894) (Enterobacter sakazakii) protein is Flagellar hook-basal body complex protein FliE.